Reading from the N-terminus, the 307-residue chain is MNEIAEVLPESMKNALSEIPEQQWLEIEEVRIRINRPVELIRRGQPVYLSYAGTAEDAHLILSRLSNYSMYTLEEELKKGYVTIRGGHRVGLAGRVITENGGVKGLRDIASFNIRIARQKLGIAEPLLPYLYQNSWLNTLIIGPPQTGKTTLLRDLARLSSTGKKNMLPVKTGIVDERSEIAGCLRGIPQHQFGQRIDVLDACPKAEGLMMMIRSMSPEVMIVDEIGRMEDTDALLEALHAGVSVIVSAHGWSISDLMKRPSLKRLWEERAFDRYLELSRAKGPGTVSQIYDKDGNVLSRTTGVKTC.

ATP is bound at residue 143-150 (GPPQTGKT).

The sequence is that of Stage III sporulation protein AA (spoIIIAA) from Bacillus subtilis (strain 168).